An 854-amino-acid polypeptide reads, in one-letter code: Putative COX1/OXI3 intron 2 protein (854 aa).

A Reverse transcriptase domain is found at 329 to 613 (LSKDINTNMF…EGVSFLGYDV (285 aa)).

Its subcellular location is the mitochondrion. This is Putative COX1/OXI3 intron 2 protein (AI2) from Saccharomyces cerevisiae (strain ATCC 204508 / S288c) (Baker's yeast).